The sequence spans 179 residues: Large ribosomal subunit protein uL6 (179 aa).

This sequence belongs to the universal ribosomal protein uL6 family. In terms of assembly, part of the 50S ribosomal subunit.

Functionally, this protein binds to the 23S rRNA, and is important in its secondary structure. It is located near the subunit interface in the base of the L7/L12 stalk, and near the tRNA binding site of the peptidyltransferase center. The chain is Large ribosomal subunit protein uL6 from Trichlorobacter lovleyi (strain ATCC BAA-1151 / DSM 17278 / SZ) (Geobacter lovleyi).